The following is a 268-amino-acid chain: MINIQNTILGKIVDRKHEELAARLKQRNLQDVEELAKAATPVRGFANALQHKRPGVIAEIKKASPSKGIIRADFNPAEIAEQYEQAGAACLSVLTDVDFFQGADENIAIARNHCALPALRKDFLVDPYNVVEARALHADCILLIVACLSDQQLEEMSKTAFEHQLDVLVEVHDEEELERALKLSEQCLLGVNNRNLKTFDVDLNTTIRLKKLLPASRLLITESGIATPDDVRMMQEHDIHSFLVGESFMKQPRPDQAFTALFGQPQTV.

The protein belongs to the TrpC family.

The enzyme catalyses 1-(2-carboxyphenylamino)-1-deoxy-D-ribulose 5-phosphate + H(+) = (1S,2R)-1-C-(indol-3-yl)glycerol 3-phosphate + CO2 + H2O. It participates in amino-acid biosynthesis; L-tryptophan biosynthesis; L-tryptophan from chorismate: step 4/5. The polypeptide is Indole-3-glycerol phosphate synthase (Acinetobacter baumannii (strain ACICU)).